The chain runs to 1360 residues: S-layer protein A (1360 aa).

The first 24 residues, 1–24, serve as a signal peptide directing secretion; the sequence is MNKSAIRYLSLLLVFLMGGSFLAG.

Belongs to the Sulfolobales SlaA family. In terms of assembly, the mushroom-shaped unit cells of the Sulfolobales' S-layers may consist of three SlaB subunits and six SlaA subunits.

It localises to the secreted. Its subcellular location is the cell wall. It is found in the S-layer. Functionally, S-layer large protein. May form the highly ordered outer sheath. This is S-layer protein A from Metallosphaera sedula (strain ATCC 51363 / DSM 5348 / JCM 9185 / NBRC 15509 / TH2).